Here is a 759-residue protein sequence, read N- to C-terminus: Phosphoribosylformylglycinamidine synthase subunit PurL (759 aa).

His-48 is a catalytic residue. Positions 51 and 91 each coordinate ATP. Glu-93 contributes to the Mg(2+) binding site. Substrate is bound by residues 94–97 (SHNH) and Arg-116. The active-site Proton acceptor is the His-95. Asp-117 is a binding site for Mg(2+). Gln-240 serves as a coordination point for substrate. Asp-268 contacts Mg(2+). Position 317–319 (317–319 (ESQ)) interacts with substrate. Asn-501 and Gly-538 together coordinate ATP. Asn-539 lines the Mg(2+) pocket. Substrate is bound at residue Ser-541.

Belongs to the FGAMS family. Monomer. Part of the FGAM synthase complex composed of 1 PurL, 1 PurQ and 2 PurS subunits.

The protein resides in the cytoplasm. The catalysed reaction is N(2)-formyl-N(1)-(5-phospho-beta-D-ribosyl)glycinamide + L-glutamine + ATP + H2O = 2-formamido-N(1)-(5-O-phospho-beta-D-ribosyl)acetamidine + L-glutamate + ADP + phosphate + H(+). It functions in the pathway purine metabolism; IMP biosynthesis via de novo pathway; 5-amino-1-(5-phospho-D-ribosyl)imidazole from N(2)-formyl-N(1)-(5-phospho-D-ribosyl)glycinamide: step 1/2. In terms of biological role, part of the phosphoribosylformylglycinamidine synthase complex involved in the purines biosynthetic pathway. Catalyzes the ATP-dependent conversion of formylglycinamide ribonucleotide (FGAR) and glutamine to yield formylglycinamidine ribonucleotide (FGAM) and glutamate. The FGAM synthase complex is composed of three subunits. PurQ produces an ammonia molecule by converting glutamine to glutamate. PurL transfers the ammonia molecule to FGAR to form FGAM in an ATP-dependent manner. PurS interacts with PurQ and PurL and is thought to assist in the transfer of the ammonia molecule from PurQ to PurL. In Chlorobaculum tepidum (strain ATCC 49652 / DSM 12025 / NBRC 103806 / TLS) (Chlorobium tepidum), this protein is Phosphoribosylformylglycinamidine synthase subunit PurL.